Here is a 78-residue protein sequence, read N- to C-terminus: DNA-directed RNA polymerase subunit Rpo5 (78 aa).

The protein belongs to the archaeal Rpo5/eukaryotic RPB5 RNA polymerase subunit family. As to quaternary structure, part of the RNA polymerase complex.

The protein resides in the cytoplasm. It carries out the reaction RNA(n) + a ribonucleoside 5'-triphosphate = RNA(n+1) + diphosphate. In terms of biological role, DNA-dependent RNA polymerase (RNAP) catalyzes the transcription of DNA into RNA using the four ribonucleoside triphosphates as substrates. The sequence is that of DNA-directed RNA polymerase subunit Rpo5 from Methanosarcina mazei (strain ATCC BAA-159 / DSM 3647 / Goe1 / Go1 / JCM 11833 / OCM 88) (Methanosarcina frisia).